The chain runs to 357 residues: MSDTTSLNVPELESPPIERVELESLLVMNIIKHCRDSFPNMGTIGQLVGIDIDGVLQVSSSFESPSVLENEESAVNKSVSGKARQAHTEAMLNRLQYIGAVTGHVGWYLGAYVSSFLSSPFFVETQYAYQKANPNSIAFLYDLSQSSNGTLYMRAYQLTPEFMAAHEEKTWTASSLNSHNLTPSNVIRELPIVIHNSHLATCLLHSLSEPPTPASTLTAEAALEDCESNLPLTETFSNFEVSLGTRYRKNIELLLESTDEFHYEQGNLGFHQRQLAREQAKIQQWIAKRKAENANRAAENLQPLPLDDWKRIFKLPAEPRLLDSLLISSQIMKSTQIDEQSSAFLSKLAGVRNAYAS.

The region spanning 20–162 is the MPN domain; the sequence is VELESLLVMN…MRAYQLTPEF (143 aa).

This sequence belongs to the eIF-3 subunit H family. Component of the eukaryotic translation initiation factor 3 (eIF-3) complex. The eIF-3 complex appears to include tif32/eif3a, SPAC25G10.08/eif3b, tif33/eif3c, SPBC4C3.07/eif3f, tif35/eif3g and sum1/eif3i. This set of common subunits may also associate exclusively with either moe1/eif3d and int6/eif3e, or with SPAC821.05/eif3h and SPAC1751.03/eif3m. The eIF-3 complex may also include SPAC3A12.13c/eif3j.

The protein localises to the cytoplasm. Its subcellular location is the nucleus. Its function is as follows. Component of the eukaryotic translation initiation factor 3 (eIF-3) complex, which is involved in protein synthesis of a specialized repertoire of mRNAs and, together with other initiation factors, stimulates binding of mRNA and methionyl-tRNAi to the 40S ribosome. The eIF-3 complex specifically targets and initiates translation of a subset of mRNAs involved in cell proliferation. The chain is Eukaryotic translation initiation factor 3 subunit H (eif3h) from Schizosaccharomyces pombe (strain 972 / ATCC 24843) (Fission yeast).